A 470-amino-acid chain; its full sequence is MITKDVKEQLIQVSGPENFDDSNAGRLVYSYDATPQYQSMPDAVIAPRNTDEISRILTICSEHRVPIVPRGSGTNLCGGTCPTEGGLVLLFKHMNQILEIDEENLTATVQPGVITLDMIRAVESKGLFYPPDPSSMKISTIGGNINENSGGLRGLKYGVTRDYVIGLEVVLANGDIIRTGGKLAKDVAGYDLTRLFVGSEGTLGIVTEAIVKLVPKPETKKTLLALYENIDAAAQTVSDIIAAKIIPATLEFLDQPTLLVIEDYAKIGLPTSAKAVLLIEQDGPFETVERDMEKIEAICKKGDAVSVQTAQTEEEAFALTEARRSALSALARLKPTTILEDATVPRSEIANMVKAINDIAAKYDISICTFGHAGDGNLHPTCTTDIRNKDEMERVEQAFAEIFEKAIELGGTITGEHGVGEMKAPYLEMKLKKEGIDAMKALKAAFDPRNILNPGKMFAKDARKRVVAER.

In terms of domain architecture, FAD-binding PCMH-type spans 37–216 (YQSMPDAVIA…TEAIVKLVPK (180 aa)).

It belongs to the FAD-binding oxidoreductase/transferase type 4 family. As to quaternary structure, the glycolate oxidase likely consists of several subunits including GlcD and GlcF. It depends on FAD as a cofactor.

Its subcellular location is the cell membrane. It catalyses the reaction glycolate + A = glyoxylate + AH2. The enzyme catalyses (R)-lactate + A = pyruvate + AH2. Functionally, component of a complex that catalyzes the oxidation of glycolate to glyoxylate. Is also able to oxidize D-lactate ((R)-lactate). Does not link directly to O(2), and 2,6-dichloroindophenol (DCIP) and phenazine methosulfate (PMS) can act as artificial electron acceptors in vitro, but the physiological molecule that functions as primary electron acceptor during glycolate oxidation is unknown. The polypeptide is Glycolate oxidase subunit GlcD (glcD) (Bacillus subtilis (strain 168)).